A 744-amino-acid chain; its full sequence is Elongation factor G, mitochondrial (744 aa).

The region spanning Glu-39–Gly-316 is the tr-type G domain. Residues Ala-48–Thr-55, Asp-115–His-119, and Asn-169–Asp-172 contribute to the GTP site. Residues Val-725–Ser-735 show a composition bias toward polar residues. The disordered stretch occupies residues Val-725–Asn-744.

It belongs to the TRAFAC class translation factor GTPase superfamily. Classic translation factor GTPase family. EF-G/EF-2 subfamily.

It is found in the mitochondrion. It participates in protein biosynthesis; polypeptide chain elongation. Its function is as follows. Mitochondrial GTPase that catalyzes the GTP-dependent ribosomal translocation step during translation elongation. During this step, the ribosome changes from the pre-translocational (PRE) to the post-translocational (POST) state as the newly formed A-site-bound peptidyl-tRNA and P-site-bound deacylated tRNA move to the P and E sites, respectively. Catalyzes the coordinated movement of the two tRNA molecules, the mRNA and conformational changes in the ribosome. Essential during development as it acts as a retrograde signal from mitochondria to the nucleus to slow down cell proliferation if mitochondrial energy output is low. This Drosophila pseudoobscura pseudoobscura (Fruit fly) protein is Elongation factor G, mitochondrial.